The following is a 111-amino-acid chain: Succinate dehydrogenase assembly factor 1B, mitochondrial (111 aa).

Belongs to the complex I LYR family. SDHAF1 subfamily. Interacts with the iron-sulfur protein subunit within the SDH catalytic dimer.

It is found in the mitochondrion matrix. Functionally, plays an essential role in the assembly of succinate dehydrogenase (SDH), an enzyme complex (also referred to as respiratory complex II) that is a component of both the tricarboxylic acid (TCA) cycle and the mitochondrial electron transport chain, and which couples the oxidation of succinate to fumarate with the reduction of ubiquinone (coenzyme Q) to ubiquinol. Promotes maturation of the iron-sulfur protein subunit of the SDH catalytic dimer, protecting it from the deleterious effects of oxidants. May act together with SDHAF3. This Dictyostelium discoideum (Social amoeba) protein is Succinate dehydrogenase assembly factor 1B, mitochondrial.